The primary structure comprises 332 residues: MSDFAFFALEALIKCIIIIAIFASLAGLATYAERKVLAYFQRRIGPDMVGPFGLIQLVADMIKLFTKEDIIPSNSQKFIFAIAPLISAICAFVSLAAIPMLPEFTLFGRVIQPIVADINVALLFVIGTSGLCFYAVFLGGLASNNKWSILGAARGLVAIISYESVGALALIAIVMLVGSFSLVDINNYQSDGFFSWLIFKQPLAFVLFIIALFIETNRTPLCLTENDAEIVAGYGTEYSGLRWGMFFIGEYASMIAGAILVTLLFLGGFNSFWIIPGWIMMIVKSSFIFFWYFWARAAFPQLRPDQVMKMCYLILIPLAVLNLLITALAVLL.

The next 9 membrane-spanning stretches (helical) occupy residues Phe-4 to Ser-24, Ile-44 to Leu-64, Phe-78 to Ile-98, Val-120 to Gly-140, Val-165 to Ile-185, Phe-194 to Ile-214, Ile-255 to Ile-275, Ile-279 to Phe-299, and Tyr-312 to Leu-332.

The protein belongs to the complex I subunit 1 family. NDH-1 is composed of 14 different subunits. Subunits NuoA, H, J, K, L, M, N constitute the membrane sector of the complex.

It localises to the cell inner membrane. The enzyme catalyses a quinone + NADH + 5 H(+)(in) = a quinol + NAD(+) + 4 H(+)(out). NDH-1 shuttles electrons from NADH, via FMN and iron-sulfur (Fe-S) centers, to quinones in the respiratory chain. The immediate electron acceptor for the enzyme in this species is believed to be ubiquinone. Couples the redox reaction to proton translocation (for every two electrons transferred, four hydrogen ions are translocated across the cytoplasmic membrane), and thus conserves the redox energy in a proton gradient. This subunit may bind ubiquinone. The sequence is that of NADH-quinone oxidoreductase subunit H from Campylobacter jejuni subsp. jejuni serotype O:6 (strain 81116 / NCTC 11828).